Reading from the N-terminus, the 212-residue chain is Lipopolysaccharide core heptose(II)-phosphate phosphatase (212 aa).

Positions 1–32 (MSIGGVYELAFCRSSLKSKKYFIILLALAAIA) are cleaved as a signal peptide.

Belongs to the phosphoglycerate mutase family. Ais subfamily.

It is found in the periplasm. The protein operates within bacterial outer membrane biogenesis; lipopolysaccharide metabolism. Catalyzes the dephosphorylation of heptose(II) of the outer membrane lipopolysaccharide core. The chain is Lipopolysaccharide core heptose(II)-phosphate phosphatase from Shigella boydii serotype 4 (strain Sb227).